Consider the following 391-residue polypeptide: Phosphoglycerate kinase (391 aa).

Substrate is bound by residues 21–23, Arg36, 59–62, Arg113, and Arg146; these read DLN and HLGR. ATP contacts are provided by residues Lys197, Glu319, and 345–348; that span reads GGDT.

Belongs to the phosphoglycerate kinase family. As to quaternary structure, monomer.

It is found in the cytoplasm. The enzyme catalyses (2R)-3-phosphoglycerate + ATP = (2R)-3-phospho-glyceroyl phosphate + ADP. The protein operates within carbohydrate degradation; glycolysis; pyruvate from D-glyceraldehyde 3-phosphate: step 2/5. In Shewanella sp. (strain W3-18-1), this protein is Phosphoglycerate kinase.